A 166-amino-acid chain; its full sequence is Putative 4-hydroxy-4-methyl-2-oxoglutarate aldolase (166 aa).

Substrate is bound by residues 74-77 (GDQI) and Arg96. Asp97 provides a ligand contact to a divalent metal cation.

The protein belongs to the class II aldolase/RraA-like family. Homotrimer. A divalent metal cation serves as cofactor.

The enzyme catalyses 4-hydroxy-4-methyl-2-oxoglutarate = 2 pyruvate. The catalysed reaction is oxaloacetate + H(+) = pyruvate + CO2. Its function is as follows. Catalyzes the aldol cleavage of 4-hydroxy-4-methyl-2-oxoglutarate (HMG) into 2 molecules of pyruvate. Also contains a secondary oxaloacetate (OAA) decarboxylase activity due to the common pyruvate enolate transition state formed following C-C bond cleavage in the retro-aldol and decarboxylation reactions. The chain is Putative 4-hydroxy-4-methyl-2-oxoglutarate aldolase from Xanthomonas oryzae pv. oryzae (strain MAFF 311018).